The following is a 693-amino-acid chain: Methionine--tRNA ligase (693 aa).

The 'HIGH' region motif lies at 12 to 22 (PYANGPLHLGH). Residues cysteine 143, cysteine 146, cysteine 156, and cysteine 159 each contribute to the Zn(2+) site. The short motif at 330-334 (KMSKS) is the 'KMSKS' region element. Lysine 333 lines the ATP pocket. Residues 557–576 (APTAKNEAAKPAAPAAAKTE) are disordered. In terms of domain architecture, tRNA-binding spans 590-693 (DFAKLDLRIG…SGAQPGMPVR (104 aa)).

Belongs to the class-I aminoacyl-tRNA synthetase family. MetG type 1 subfamily. As to quaternary structure, homodimer. Requires Zn(2+) as cofactor.

It is found in the cytoplasm. It carries out the reaction tRNA(Met) + L-methionine + ATP = L-methionyl-tRNA(Met) + AMP + diphosphate. Its function is as follows. Is required not only for elongation of protein synthesis but also for the initiation of all mRNA translation through initiator tRNA(fMet) aminoacylation. The polypeptide is Methionine--tRNA ligase (Stenotrophomonas maltophilia (strain R551-3)).